Here is a 343-residue protein sequence, read N- to C-terminus: Plasminogen (343 aa).

2 consecutive Kringle domains span residues 1 to 17 (APQA…DCML) and 41 to 120 (AQEP…GCVA). The tract at residues 1–140 (APQAPSVENP…LRRRSREHFC (140 aa)) is plasmin heavy chain A. Cystine bridges form between cysteine 15-cysteine 94, cysteine 36-cysteine 77, and cysteine 65-cysteine 89. A Peptidase S1 domain is found at 114–341 (VVGGCVATPH…YVPWIEETMR (228 aa)). The residue at position 130 (serine 130) is a Phosphoserine. A disulfide bond links cysteine 140 and cysteine 156. Positions 141–343 (GGTLISPEWV…PWIEETMRRY (203 aa)) are plasmin light chain B. Active-site charge relay system residues include histidine 155 and aspartate 198. Position 221 is a phosphoserine (serine 221). Intrachain disulfides connect cysteine 232/cysteine 299, cysteine 262/cysteine 278, and cysteine 289/cysteine 317. Serine 293 serves as the catalytic Charge relay system.

This sequence belongs to the peptidase S1 family. Plasminogen subfamily. Interacts with CSPG4 and AMOT. Interacts (via the Kringle domains) with HRG; the interaction tethers PLG to the cell surface and enhances its activation. Interacts (via Kringle 4 domain) with ADA; the interaction stimulates PLG activation when in complex with DPP4. Angiostatin: Interacts with ATP5F1A; the interaction inhibits most of the angiogenic effects of angiostatin.

The protein resides in the secreted. The catalysed reaction is Preferential cleavage: Lys-|-Xaa &gt; Arg-|-Xaa, higher selectivity than trypsin. Converts fibrin into soluble products.. With respect to regulation, converted into plasmin by plasminogen activators, both plasminogen and its activator being bound to fibrin. Cannot be activated with streptokinase. Functionally, plasmin dissolves the fibrin of blood clots and acts as a proteolytic factor in a variety of other processes including embryonic development, tissue remodeling, tumor invasion, and inflammation. In ovulation, weakens the walls of the Graafian follicle. It activates the urokinase-type plasminogen activator, collagenases and several complement zymogens, such as C1, C4 and C5. Cleavage of fibronectin and laminin leads to cell detachment and apoptosis. Also cleaves fibrin, thrombospondin and von Willebrand factor. Its role in tissue remodeling and tumor invasion may be modulated by CSPG4. Binds to cells. The protein is Plasminogen (PLG) of Ovis aries (Sheep).